Here is a 409-residue protein sequence, read N- to C-terminus: Arginine biosynthesis bifunctional protein ArgJ (409 aa).

Thr-157, Lys-183, Thr-194, Glu-281, Asn-404, and Ser-409 together coordinate substrate. Catalysis depends on Thr-194, which acts as the Nucleophile.

The protein belongs to the ArgJ family. Heterotetramer of two alpha and two beta chains.

It is found in the cytoplasm. It catalyses the reaction N(2)-acetyl-L-ornithine + L-glutamate = N-acetyl-L-glutamate + L-ornithine. The enzyme catalyses L-glutamate + acetyl-CoA = N-acetyl-L-glutamate + CoA + H(+). It functions in the pathway amino-acid biosynthesis; L-arginine biosynthesis; L-ornithine and N-acetyl-L-glutamate from L-glutamate and N(2)-acetyl-L-ornithine (cyclic): step 1/1. It participates in amino-acid biosynthesis; L-arginine biosynthesis; N(2)-acetyl-L-ornithine from L-glutamate: step 1/4. Functionally, catalyzes two activities which are involved in the cyclic version of arginine biosynthesis: the synthesis of N-acetylglutamate from glutamate and acetyl-CoA as the acetyl donor, and of ornithine by transacetylation between N(2)-acetylornithine and glutamate. The chain is Arginine biosynthesis bifunctional protein ArgJ from Zymomonas mobilis subsp. mobilis (strain ATCC 31821 / ZM4 / CP4).